Reading from the N-terminus, the 515-residue chain is UDP-glucosyltransferase 2 (515 aa).

A signal peptide spans 1–20; it reads MEFRLLILALFSVLMSTSNG. The Lumenal portion of the chain corresponds to 21–471; that stretch reads AEILALFPIH…TAGAFLHWYQ (451 aa). N51, N236, and N303 each carry an N-linked (GlcNAc...) asparagine glycan. A helical membrane pass occupies residues 472–492; that stretch reads YLLLDVITFLLVTFCAFCFIV. Residues 493-515 lie on the Cytoplasmic side of the membrane; that stretch reads KYICKALIHHYWSSSKSEKLKKN.

It belongs to the UDP-glycosyltransferase family. Post-translationally, glycosylated.

The protein localises to the endoplasmic reticulum membrane. It catalyses the reaction kermesate + UDP-alpha-D-glucose = carminate + UDP + 2 H(+). The enzyme catalyses flavokermesate + UDP-alpha-D-glucose = flavokermesate 7-C-beta-D-glucoside + UDP + 2 H(+). In terms of biological role, membrane-bound UDP-glucosyltransferase (UGT) which catalyzes the C-glucosylation of kermesate and flavokermesate to produce carminate and flavokermesate 7-C-beta-D-glucoside (dcll) respectively. Carminate is used as a deterrent against insect predators. This is UDP-glucosyltransferase 2 from Dactylopius coccus (Cochineal).